Here is a 188-residue protein sequence, read N- to C-terminus: Cell division protein ZapC (188 aa).

This sequence belongs to the ZapC family. As to quaternary structure, interacts directly with FtsZ.

Its subcellular location is the cytoplasm. Contributes to the efficiency of the cell division process by stabilizing the polymeric form of the cell division protein FtsZ. Acts by promoting interactions between FtsZ protofilaments and suppressing the GTPase activity of FtsZ. The chain is Cell division protein ZapC from Psychromonas ingrahamii (strain DSM 17664 / CCUG 51855 / 37).